The following is a 401-amino-acid chain: Inactive (1R,4R,5S)-(-)-guaia-6,10(14)-diene synthase (401 aa).

The disordered stretch occupies residues Met1–Ile20. Residues Asp134 and Glu139 each contribute to the Mg(2+) site. The DDXXD motif signature appears at Asp134–Asp138. Arg242 provides a ligand contact to substrate. Ser292 is a Mg(2+) binding site. Position 295 (Lys295) interacts with substrate. Residue Asp296 coordinates Mg(2+). Arg375–Tyr376 serves as a coordination point for substrate.

This sequence belongs to the terpene synthase family. It depends on Mg(2+) as a cofactor.

The polypeptide is Inactive (1R,4R,5S)-(-)-guaia-6,10(14)-diene synthase (Gibberella fujikuroi (strain CBS 195.34 / IMI 58289 / NRRL A-6831) (Bakanae and foot rot disease fungus)).